A 659-amino-acid polypeptide reads, in one-letter code: Threonine--tRNA ligase (659 aa).

The 60-residue stretch at 1 to 60 (MTVYLPDGKPLELPEGATAKDVARALGEGWERRAVGAIVDGELYDLLKPLPQGAKVRLLT) folds into the TGS domain. 2 catalytic regions span residues 234-548 (TAEE…EHFA) and 252-552 (DHRR…GDFP). Residues cysteine 349, histidine 400, and histidine 529 each coordinate Zn(2+).

Belongs to the class-II aminoacyl-tRNA synthetase family. Homodimer. The cofactor is Zn(2+).

The protein localises to the cytoplasm. The catalysed reaction is tRNA(Thr) + L-threonine + ATP = L-threonyl-tRNA(Thr) + AMP + diphosphate + H(+). In terms of biological role, catalyzes the attachment of threonine to tRNA(Thr) in a two-step reaction: L-threonine is first activated by ATP to form Thr-AMP and then transferred to the acceptor end of tRNA(Thr). Also edits incorrectly charged L-seryl-tRNA(Thr). The chain is Threonine--tRNA ligase from Thermus thermophilus (strain ATCC 27634 / DSM 579 / HB8).